A 491-amino-acid polypeptide reads, in one-letter code: Ketol-acid reductoisomerase (NADP(+)) (491 aa).

A KARI N-terminal Rossmann domain is found at 15-208 (AQLGKCRFMA…GGHRAGVLES (194 aa)). NADP(+) is bound by residues 45–48 (CGAQ), Arg-68, Arg-76, Ser-78, and 108–110 (DKQ). The active site involves His-132. Gly-158 contacts NADP(+). KARI C-terminal knotted domains lie at 209-344 (SFVA…TAPQ) and 345-484 (YEGK…MTDM). Asp-217, Glu-221, Glu-389, and Glu-393 together coordinate Mg(2+). A substrate-binding site is contributed by Ser-414.

It belongs to the ketol-acid reductoisomerase family. Requires Mg(2+) as cofactor.

It carries out the reaction (2R)-2,3-dihydroxy-3-methylbutanoate + NADP(+) = (2S)-2-acetolactate + NADPH + H(+). It catalyses the reaction (2R,3R)-2,3-dihydroxy-3-methylpentanoate + NADP(+) = (S)-2-ethyl-2-hydroxy-3-oxobutanoate + NADPH + H(+). It functions in the pathway amino-acid biosynthesis; L-isoleucine biosynthesis; L-isoleucine from 2-oxobutanoate: step 2/4. The protein operates within amino-acid biosynthesis; L-valine biosynthesis; L-valine from pyruvate: step 2/4. Functionally, involved in the biosynthesis of branched-chain amino acids (BCAA). Catalyzes an alkyl-migration followed by a ketol-acid reduction of (S)-2-acetolactate (S2AL) to yield (R)-2,3-dihydroxy-isovalerate. In the isomerase reaction, S2AL is rearranged via a Mg-dependent methyl migration to produce 3-hydroxy-3-methyl-2-ketobutyrate (HMKB). In the reductase reaction, this 2-ketoacid undergoes a metal-dependent reduction by NADPH to yield (R)-2,3-dihydroxy-isovalerate. This is Ketol-acid reductoisomerase (NADP(+)) from Klebsiella pneumoniae subsp. pneumoniae (strain ATCC 700721 / MGH 78578).